The sequence spans 113 residues: Tubulin-folding cofactor A (113 aa).

The tract at residues Leu83–Ala113 is disordered. Over residues Lys89 to Ala113 the composition is skewed to basic and acidic residues.

It belongs to the TBCA family. Monomer. Supercomplex made of cofactors A to E. Cofactors A and D function by capturing and stabilizing tubulin in a quasi-native conformation. Cofactor E binds to the cofactor D-tubulin complex; interaction with cofactor C then causes the release of tubulin polypeptides that are committed to the native state. Interacts with TUBB9. In terms of tissue distribution, expressed in leaves, roots, flowers and stems.

In terms of biological role, tubulin-folding protein involved in the control of the alpha-/beta-tubulin monomer balance. Functions as a reservoir of bound and non-toxic beta-tubulin. Required in the developing embryo. The sequence is that of Tubulin-folding cofactor A (TFCA) from Arabidopsis thaliana (Mouse-ear cress).